A 162-amino-acid polypeptide reads, in one-letter code: Protein NrdI (162 aa).

The protein belongs to the NrdI family.

In terms of biological role, probably involved in ribonucleotide reductase function. This Streptococcus pyogenes serotype M1 protein is Protein NrdI.